The sequence spans 150 residues: Small ribosomal subunit protein eS19 (150 aa).

It belongs to the eukaryotic ribosomal protein eS19 family. In terms of assembly, part of the 30S ribosomal subunit.

Functionally, may be involved in maturation of the 30S ribosomal subunit. The polypeptide is Small ribosomal subunit protein eS19 (Pyrococcus horikoshii (strain ATCC 700860 / DSM 12428 / JCM 9974 / NBRC 100139 / OT-3)).